The sequence spans 219 residues: MSMGLEITGTSLAVLGWLCTIVCCALPMWRVSAFIGSSIITAQITWEGLWMNCVVQSTGQMQCKMYDSLLALPQDLQAARALIVVSILLAAFGLLVALVGAQCTNCVQDETAKAKITIVAGVLFLLAALLTLVPVSWSANTIIRDFYNPLVPEAQKREMGAGLYVGWAAAALQLLGGALLCCSCPPRDKYAPTKILYSAPRSTGPGTGTGTAYDRKDYV.

Topologically, residues 1–8 (MSMGLEIT) are cytoplasmic. A helical transmembrane segment spans residues 9 to 29 (GTSLAVLGWLCTIVCCALPMW). The Extracellular portion of the chain corresponds to 30-80 (RVSAFIGSSIITAQITWEGLWMNCVVQSTGQMQCKMYDSLLALPQDLQAAR). Residues 81-101 (ALIVVSILLAAFGLLVALVGA) traverse the membrane as a helical segment. The Cytoplasmic segment spans residues 102-115 (QCTNCVQDETAKAK). A helical membrane pass occupies residues 116-136 (ITIVAGVLFLLAALLTLVPVS). Residues 137 to 159 (WSANTIIRDFYNPLVPEAQKREM) are Extracellular-facing. A helical transmembrane segment spans residues 160-180 (GAGLYVGWAAAALQLLGGALL). The Cytoplasmic portion of the chain corresponds to 181-219 (CCSCPPRDKYAPTKILYSAPRSTGPGTGTGTAYDRKDYV). Tyrosine 197 is subject to Phosphotyrosine. Position 198 is a phosphoserine (serine 198). Positions 218 to 219 (YV) are interactions with TJP1, TJP2 and TJP3.

Belongs to the claudin family. As to quaternary structure, can form homo- and heteropolymers with other CLDN. Homopolymers interact with CLDN1 and CLDN2 homopolymers. Interacts in cis (within the same plasma membrane) with CLDN19. Directly interacts with TJP1/ZO-1, TJP2/ZO-2 and TJP3/ZO-3. (Microbial infection) Interacts with Clostridium perfringens enterotoxin CPE; the interaction may disrupt claudin assembly in tight junctions. In terms of tissue distribution, expressed in the lung. Expressed at high levels in the liver and at lower levels, in kidney and testis.

The protein localises to the cell junction. It is found in the tight junction. The protein resides in the cell membrane. In terms of biological role, plays a major role in tight junction-specific obliteration of the intercellular space, through calcium-independent cell-adhesion activity. The sequence is that of Claudin-3 (Cldn3) from Mus musculus (Mouse).